The sequence spans 168 residues: 6-pyruvoyl tetrahydrobiopterin synthase (168 aa).

His19 is a binding site for Zn(2+). The Proton acceptor role is filled by Cys38. Zn(2+)-binding residues include His44 and His46. Active-site charge relay system residues include His85 and Glu130. Ser159 carries the phosphoserine modification. Thr161 carries the phosphothreonine modification. A phosphoserine mark is found at Ser164, Ser165, and Ser167.

Belongs to the PTPS family. Homohexamer formed of two homotrimers in a head to head fashion. The cofactor is Zn(2+).

The enzyme catalyses 7,8-dihydroneopterin 3'-triphosphate = 6-pyruvoyl-5,6,7,8-tetrahydropterin + triphosphate + H(+). Its pathway is cofactor biosynthesis; tetrahydrobiopterin biosynthesis; tetrahydrobiopterin from 7,8-dihydroneopterin triphosphate: step 1/3. Its function is as follows. Required for pigment and biopterin synthesis. The chain is 6-pyruvoyl tetrahydrobiopterin synthase (pr) from Drosophila melanogaster (Fruit fly).